Reading from the N-terminus, the 434-residue chain is Double-stranded RNA-binding protein 2 (434 aa).

DRBM domains lie at 1–70 and 87–155; these read MYKN…ALSN and VYKN…SLKQ. Residues 402–434 are disordered; sequence EKTASKETERAEFKDSSKGEPETARERLENLKI.

As to quaternary structure, heterodimer with DRB1 or DRB5. Interacts with DCL1 and DCL5.

It localises to the cytoplasm. In terms of biological role, binds double-stranded RNA. May be involved in RNA-mediated silencing. This is Double-stranded RNA-binding protein 2 (DRB2) from Arabidopsis thaliana (Mouse-ear cress).